Reading from the N-terminus, the 305-residue chain is Putative E3 ubiquitin-protein ligase SINAT1 (305 aa).

Residues 57–93 (CPVCTNLMYPPIHQCPNGHTLCSSCKLRVQNTCPTCR) form an RING-type zinc finger. An SBD region spans residues 107 to 300 (VAESLEVPCR…EELKLRVTGR (194 aa)). An SIAH-type zinc finger spans residues 110–170 (SLEVPCRYQN…LVDHLKDDHK (61 aa)). Zn(2+) is bound by residues Cys-115, Cys-122, His-134, Cys-138, Cys-145, Cys-152, His-164, and His-169.

It belongs to the SINA (Seven in absentia) family. As to quaternary structure, interacts with SINAT6. Interacts with ATG6 and TRAF1A. Interacts with WAV3. Interacts with FREE1. Interacts with ELC/VPS23A.

It localises to the endosome. Its subcellular location is the multivesicular body. The protein localises to the cytoplasmic vesicle. The protein resides in the autophagosome. It carries out the reaction S-ubiquitinyl-[E2 ubiquitin-conjugating enzyme]-L-cysteine + [acceptor protein]-L-lysine = [E2 ubiquitin-conjugating enzyme]-L-cysteine + N(6)-ubiquitinyl-[acceptor protein]-L-lysine.. It participates in protein modification; protein ubiquitination. Its function is as follows. E3 ubiquitin-protein ligase that mediates ubiquitination and subsequent proteasomal degradation of target proteins. E3 ubiquitin ligases accept ubiquitin from an E2 ubiquitin-conjugating enzyme in the form of a thioester and then directly transfers the ubiquitin to targeted substrates. It probably triggers the ubiquitin-mediated degradation of different substrates. Mediates the proteasomal-dependent degradation of ATG6, a component of the autophagosome complex. Requires TRAF1A/MUSE14 and TRAF1B/MUSE13 to target ATG6 for ubiquitination and subsequent regulation of autophagosome assembly. Modulates directly the ubiquitination and proteasomal-dependent degradation of FREE1, a component of the ESCRT-I complex. Modulates directly the ubiquitination and proteasomal-dependent degradation of ELC/VPS23A, a component of the ESCRT-I complex. The sequence is that of Putative E3 ubiquitin-protein ligase SINAT1 from Arabidopsis thaliana (Mouse-ear cress).